The chain runs to 220 residues: Fructose-6-phosphate aldolase 1 (220 aa).

Catalysis depends on Lys-85, which acts as the Schiff-base intermediate with substrate.

It belongs to the transaldolase family. Type 3A subfamily. As to quaternary structure, homodecamer.

It localises to the cytoplasm. The catalysed reaction is beta-D-fructose 6-phosphate = dihydroxyacetone + D-glyceraldehyde 3-phosphate. Functionally, catalyzes the reversible formation of fructose 6-phosphate from dihydroxyacetone and D-glyceraldehyde 3-phosphate via an aldolization reaction. This chain is Fructose-6-phosphate aldolase 1 (fsaA), found in Escherichia coli O157:H7.